Consider the following 397-residue polypeptide: MAKEKFDRSLPHVNVGTIGHVDHGKTTLTAALTRVCSEVFGSAAVEFDKIDSAPEEKARGITINTAHVEYKSLIRHYAHVDCPGHADYVKNMITGAAQMDGAILVCSAADGPMPQTREHILLSRQVGVPYIVVFLNKADLVDDAELLELVEMEVRDLLSTYDFPGDDTPIIIGSARMALEGKDDNEMGTTAVRKLVETLDSYIPEPVRVTDKPFLMPIEDVFSISGRGTVVTGRIERGIVKVQDPLEIVGLRDTTVTTCTGVEMFRKLLDEGRAGENCGVLLRGTKRDDVERGQVLVKPGSVKPHTQFEAEIYVLSKEEGGRHTPFFKGYRPQFYFRTTDVTGSCELPEGVEMVMPGDNVKVSVTLIKPIAMEDGLRFAIREGGRTVGAGVVAKIIA.

In terms of domain architecture, tr-type G spans 10 to 207; the sequence is LPHVNVGTIG…TLDSYIPEPV (198 aa). The tract at residues 19 to 26 is G1; it reads GHVDHGKT. Residue 19–26 participates in GTP binding; the sequence is GHVDHGKT. Residue Thr26 participates in Mg(2+) binding. The interval 60-64 is G2; the sequence is GITIN. The G3 stretch occupies residues 81 to 84; sequence DCPG. GTP-binding positions include 81–85 and 136–139; these read DCPGH and NKAD. Positions 136 to 139 are G4; sequence NKAD. The G5 stretch occupies residues 174–176; that stretch reads SAR.

Belongs to the TRAFAC class translation factor GTPase superfamily. Classic translation factor GTPase family. EF-Tu/EF-1A subfamily. In terms of assembly, monomer.

Its subcellular location is the cytoplasm. It carries out the reaction GTP + H2O = GDP + phosphate + H(+). Functionally, GTP hydrolase that promotes the GTP-dependent binding of aminoacyl-tRNA to the A-site of ribosomes during protein biosynthesis. This is Elongation factor Tu from Pseudomonas syringae pv. syringae (strain B728a).